The chain runs to 197 residues: Thymidine kinase (197 aa).

ATP contacts are provided by residues serine 9–threonine 16 and aspartate 87–histidine 90. The active-site Proton acceptor is glutamate 88. Residues cysteine 145, cysteine 147, cysteine 187, and histidine 190 each coordinate Zn(2+).

Belongs to the thymidine kinase family. As to quaternary structure, homotetramer.

The protein resides in the cytoplasm. The enzyme catalyses thymidine + ATP = dTMP + ADP + H(+). The chain is Thymidine kinase from Francisella tularensis subsp. tularensis (strain SCHU S4 / Schu 4).